A 97-amino-acid polypeptide reads, in one-letter code: Large ribosomal subunit protein bL28 (97 aa).

It belongs to the bacterial ribosomal protein bL28 family.

The chain is Large ribosomal subunit protein bL28 from Brucella abortus (strain S19).